Reading from the N-terminus, the 4749-residue chain is Dynein heavy chain domain-containing protein 1 (4749 aa).

Positions 1–18 (MKPHSQTSPPSLPMPSTS) are enriched in low complexity. Disordered stretches follow at residues 1–27 (MKPH…TQKP), 275–308 (ESSD…KKSS), and 2690–2785 (ESLA…KLQS). Residues 2696–2716 (CEEEEVEEEKVPEVESEEEIA) show a composition bias toward acidic residues. The segment covering 2738–2749 (QATTGSFLSENS) has biased composition (polar residues). A coiled-coil region spans residues 3197 to 3224 (CQHQESLIENLVRQHDALKAQQEVFLEQ). The tract at residues 3568-3667 (PPKQNRSLEP…SLPSCLTVLS (100 aa)) is disordered. The segment covering 3578 to 3593 (SPKESKEKFHVTKQDS) has biased composition (basic and acidic residues). Positions 3594-3636 (GDNTEDELEDENNEEEDEANEQRKEQKAEENKIQGENEQEVQE) form a coiled coil. The span at 3595–3612 (DNTEDELEDENNEEEDEA) shows a compositional bias: acidic residues. Residues 3613–3628 (NEQRKEQKAEENKIQG) are compositionally biased toward basic and acidic residues. A compositionally biased stretch (low complexity) spans 3644–3655 (ESSGSHSSLPSE). Over residues 3656–3667 (TQSLPSCLTVLS) the composition is skewed to polar residues. Coiled-coil stretches lie at residues 3818–3838 (MVRT…LEDQ) and 4431–4451 (ERQL…LQAL).

It belongs to the dynein heavy chain family. Expressed in spermatozoa (at protein level).

The protein resides in the cell projection. It is found in the cilium. Its subcellular location is the flagellum. Functionally, essential for the normal function of sperm flagella axonemes. The protein is Dynein heavy chain domain-containing protein 1 (Dnhd1) of Mus musculus (Mouse).